We begin with the raw amino-acid sequence, 304 residues long: tRNA dimethylallyltransferase (304 aa).

2-9 (GPTASGKT) is an ATP binding site. A substrate-binding site is contributed by 4–9 (TASGKT). 4 interaction with substrate tRNA regions span residues 27–30 (DSAL), 151–155 (QRINR), 232–237 (RCVGYR), and 265–272 (KRQITWLR).

Belongs to the IPP transferase family. As to quaternary structure, monomer. The cofactor is Mg(2+).

The enzyme catalyses adenosine(37) in tRNA + dimethylallyl diphosphate = N(6)-dimethylallyladenosine(37) in tRNA + diphosphate. In terms of biological role, catalyzes the transfer of a dimethylallyl group onto the adenine at position 37 in tRNAs that read codons beginning with uridine, leading to the formation of N6-(dimethylallyl)adenosine (i(6)A). The polypeptide is tRNA dimethylallyltransferase (Actinobacillus pleuropneumoniae serotype 5b (strain L20)).